Here is a 1430-residue protein sequence, read N- to C-terminus: 3'-5' RNA helicase YTHDC2 (1430 aa).

The segment at 1–37 (MSRPSSVSPRQPAPGGGGGGGPSPCGPGGGGRAKGLK) is disordered. Positions 14 to 33 (PGGGGGGGPSPCGPGGGGRA) are enriched in gly residues. Residues 38-106 (DIRIDEEVKI…NRYLTVKKKD (69 aa)) enclose the R3H domain. The region spanning 203–369 (VKIIKENKVV…FGSCPVIYIQ (167 aa)) is the Helicase ATP-binding domain. 216-223 (GETGSGKT) serves as a coordination point for ATP. Residues 316–319 (DEVH) carry the DEAH box motif. ANK repeat units follow at residues 506 to 538 (TSATALMVAAGRGFASQVEQLISMGANVHSKAS) and 539 to 571 (NGWMALDWAKHFGQTEIVDLLESYSASLEFGNL). The Helicase C-terminal domain maps to 612 to 784 (LLYNICHSCD…ELCLHTKLLA (173 aa)). A phosphoserine mark is found at Ser1089, Ser1090, and Ser1092. Positions 1164-1174 (EQSAGLQQPSG) are enriched in polar residues. A disordered region spans residues 1164-1288 (EQSAGLQQPS…SPSPRPNMPV (125 aa)). Low complexity predominate over residues 1191–1200 (SSWRSNNSRK). Ser1202 carries the phosphoserine modification. Basic and acidic residues predominate over residues 1231–1249 (KYKDRGILHPKRGTEDRSD). A compositionally biased stretch (low complexity) spans 1250-1264 (QSSVKSTDSSSYPSP). Phosphoserine occurs at positions 1263, 1267, and 1281. The YTH domain maps to 1288–1418 (VRYFIMKSSN…QVGEQLLQLW (131 aa)). Residues 1294–1296 (KSS), Trp1310, and Trp1360 contribute to the RNA site.

Belongs to the DEAD box helicase family. DEAH subfamily. Interacts with MEIOC; binds transcripts that regulate the mitotic cell cycle inhibiting progression into metaphase, thereby allowing meiotic prophase to proceed normally. Interacts (via ANK repeats) with XRN1. Interacts with ZCCHC4. Associates with the small ribosomal subunit. Interacts with RBM46.

The protein localises to the cytoplasm. It localises to the perinuclear region. The enzyme catalyses ATP + H2O = ADP + phosphate + H(+). Functionally, 3'-5' RNA helicase that plays a key role in the male and female germline by promoting transition from mitotic to meiotic divisions in stem cells. Specifically recognizes and binds N6-methyladenosine (m6A)-containing RNAs, a modification present at internal sites of mRNAs and some non-coding RNAs that plays a role in the efficiency of RNA processing and stability. Essential for ensuring a successful progression of the meiotic program in the germline by regulating the level of m6A-containing RNAs. Acts by binding and promoting degradation of m6A-containing mRNAs: the 3'-5' RNA helicase activity is required for this process and RNA degradation may be mediated by XRN1 exoribonuclease. Required for both spermatogenesis and oogenesis. This is 3'-5' RNA helicase YTHDC2 from Pongo abelii (Sumatran orangutan).